Here is a 338-residue protein sequence, read N- to C-terminus: Formamidase (338 aa).

One can recognise a CN hydrolase domain in the interval valine 15–proline 257. Glutamate 61 serves as the catalytic Proton acceptor. The Proton donor role is filled by lysine 130. Residue cysteine 163 is the Nucleophile of the active site.

Belongs to the carbon-nitrogen hydrolase superfamily. Aliphatic amidase family.

It catalyses the reaction formamide + H2O = formate + NH4(+). Its function is as follows. Is an aliphatic amidase with a restricted substrate specificity, as it only hydrolyzes formamide. The protein is Formamidase of Pseudomonas syringae pv. syringae (strain B728a).